The sequence spans 31 residues: Cliotide T11 (31 aa).

Residues G1 to N31 constitute a cross-link (cyclopeptide (Gly-Asn)). 3 cysteine pairs are disulfide-bonded: C4–C21, C8–C23, and C13–C28.

In terms of processing, contains 3 disulfide bonds. This is a cyclic peptide. Expressed in seed but not in root, nodule, flower, stem, shoot, leaf and pod (at protein level).

Probably participates in a plant defense mechanism. The sequence is that of Cliotide T11 from Clitoria ternatea (Butterfly pea).